We begin with the raw amino-acid sequence, 512 residues long: ATP synthase subunit alpha (512 aa).

Glycine 169–threonine 176 lines the ATP pocket.

Belongs to the ATPase alpha/beta chains family. As to quaternary structure, F-type ATPases have 2 components, CF(1) - the catalytic core - and CF(0) - the membrane proton channel. CF(1) has five subunits: alpha(3), beta(3), gamma(1), delta(1), epsilon(1). CF(0) has four main subunits: a(1), b(1), b'(1) and c(9-12).

The protein localises to the cell inner membrane. It catalyses the reaction ATP + H2O + 4 H(+)(in) = ADP + phosphate + 5 H(+)(out). Functionally, produces ATP from ADP in the presence of a proton gradient across the membrane. The alpha chain is a regulatory subunit. This chain is ATP synthase subunit alpha, found in Roseobacter denitrificans (strain ATCC 33942 / OCh 114) (Erythrobacter sp. (strain OCh 114)).